We begin with the raw amino-acid sequence, 285 residues long: MLIIRNKQALKEAILKETQVNKTIGFVPTMGFLHEGHMTLVKHARKENDVVVMSVFVNPTQFGPNEDFDAYPRDEAHDAKLAEEGGVDILFVPSVEEIYPVELATKLHVIKRVSVLDGADREGHFDGVVTVLTKLFHLVNPNNAYFGQKDAQQVAVVSGLVEDYFFPVNLRIISTVRETDGLAKSSRNVYLTDKERKEAPVIHAALQLGRQLIESGETDETKIVQMMTDKINEQTAHEKIAYLALYAYPDFTPVTDWSKGIIIAAAVKYSKARLIDNELINVKRR.

30–37 (MGFLHEGH) is a binding site for ATP. Residue H37 is the Proton donor of the active site. Q61 provides a ligand contact to (R)-pantoate. Q61 contacts beta-alanine. 147 to 150 (GQKD) contacts ATP. (R)-pantoate is bound at residue Q153. ATP contacts are provided by residues V176 and 184-187 (KSSR).

Belongs to the pantothenate synthetase family. Homodimer.

The protein resides in the cytoplasm. It carries out the reaction (R)-pantoate + beta-alanine + ATP = (R)-pantothenate + AMP + diphosphate + H(+). It functions in the pathway cofactor biosynthesis; (R)-pantothenate biosynthesis; (R)-pantothenate from (R)-pantoate and beta-alanine: step 1/1. In terms of biological role, catalyzes the condensation of pantoate with beta-alanine in an ATP-dependent reaction via a pantoyl-adenylate intermediate. The polypeptide is Pantothenate synthetase (Listeria welshimeri serovar 6b (strain ATCC 35897 / DSM 20650 / CCUG 15529 / CIP 8149 / NCTC 11857 / SLCC 5334 / V8)).